Here is a 472-residue protein sequence, read N- to C-terminus: MEKNLSSRDDDALHSLSASSSYDSVYDLLHYHERGNGLTINGKPSYSIEDAGDQITRDNVSWNGSNVFGKSANLTFKFLQSARSTPDGDTGFVKFNAAQVAQAKLALQSWADLANITFTEVTGNQSANVTFGNYTRDSSGRLDYGTQAYAYLPGSGSASGTTWYNYNVDNIRSPDKMEYGRQTLTHEIGHALGLNHPGDYNAGEGNPTYREDTRQFSIMSYWSEKNTGGDFKGHYAAGPMLDDIDAIQRLYGANMTTRTGDTVYGFNSNTDRDFYTATSSSKALIFSVWDAGGKHTFDFSGYSNNQRINLNEGSLSDVGGLKGNVSIAHGVTIENAIGGSGNDLLIGNNADNILRGGAGDDILYGGGGADRLYGGSGRDTFVYTAVSDSKVAAPDWILDFQTGVDKIDLSALNTGNNLHFVNQFSGSGGEILLNWDSSASVSNLYLNLDNNTSPEFQVKIVGQVSQTADFVV.

The propeptide occupies 1-17 (MEKNLSSRDDDALHSLS). Histidine 186 is a binding site for Zn(2+). Glutamate 187 is a catalytic residue. Residues histidine 190 and tyrosine 221 each coordinate Zn(2+). Ca(2+)-binding residues include arginine 258, glycine 260, threonine 262, aspartate 290, glycine 292, glycine 293, threonine 332, glutamate 334, glycine 339, glycine 341, aspartate 343, asparagine 348, alanine 350, asparagine 352, glycine 356, glycine 357, alanine 358, glycine 359, aspartate 361, glycine 365, glycine 366, glycine 367, glycine 368, aspartate 370, glycine 374, glycine 375, glycine 377, aspartate 379, aspartate 388, aspartate 395, and aspartate 405. 2 Hemolysin-type calcium-binding repeats span residues 337–354 (IGGSGNDLLIGNNADNIL) and 355–372 (RGGAGDDILYGGGGADRL).

This sequence belongs to the peptidase M10B family. The cofactor is Ca(2+). Requires Zn(2+) as cofactor.

Its subcellular location is the secreted. The catalysed reaction is Preferential cleavage of bonds with hydrophobic residues in P1'.. This chain is Serralysin A (prtA), found in Dickeya chrysanthemi (Pectobacterium chrysanthemi).